Here is a 179-residue protein sequence, read N- to C-terminus: Shikimate kinase (179 aa).

Glycine 15–serine 20 serves as a coordination point for ATP. Threonine 19 provides a ligand contact to Mg(2+). Substrate-binding residues include aspartate 37, arginine 61, and glycine 83. Arginine 122 provides a ligand contact to ATP. Arginine 142 is a binding site for substrate.

It belongs to the shikimate kinase family. As to quaternary structure, monomer. It depends on Mg(2+) as a cofactor.

It is found in the cytoplasm. It catalyses the reaction shikimate + ATP = 3-phosphoshikimate + ADP + H(+). Its pathway is metabolic intermediate biosynthesis; chorismate biosynthesis; chorismate from D-erythrose 4-phosphate and phosphoenolpyruvate: step 5/7. Its function is as follows. Catalyzes the specific phosphorylation of the 3-hydroxyl group of shikimic acid using ATP as a cosubstrate. The chain is Shikimate kinase from Coxiella burnetii (strain Dugway 5J108-111).